The chain runs to 476 residues: Ataxin-10 (476 aa).

The residue at position 10 (Arg10) is an Omega-N-methylarginine. Phosphoserine is present on residues Ser13 and Ser78. At Thr83 the chain carries Phosphothreonine. The residue at position 431 (Ser431) is a Phosphoserine.

Belongs to the ataxin-10 family. As to quaternary structure, homooligomer. Interacts with GNB2. Interacts with IQCB1. Interacts with OGT. Polyubiquitinated. Post-translationally, phosphorylation at Ser-13 by AURKB promotes the association of ATXN10 with PLK1. Phosphorylation at Ser-78 and Thr-83 by PLK1 may play a role in the regulation of cytokinesis and may stimulate the proteasome-mediated degradation of ATXN10.

It localises to the cytoplasm. The protein localises to the perinuclear region. Its subcellular location is the midbody. The protein resides in the cytoskeleton. It is found in the cilium basal body. It localises to the microtubule organizing center. The protein localises to the centrosome. Its subcellular location is the centriole. Functionally, may play a role in the regulation of cytokinesis. May play a role in signaling by stimulating protein glycosylation. Induces neuritogenesis by activating the Ras-MAP kinase pathway and is necessary for the survival of cerebellar neurons. Does not appear to play a major role in ciliogenesis. This Pongo abelii (Sumatran orangutan) protein is Ataxin-10 (ATXN10).